A 218-amino-acid polypeptide reads, in one-letter code: Embryonic polyadenylate-binding protein 2-B (218 aa).

2 disordered regions span residues 1–24 (MSER…ELDD) and 169–218 (RTNM…NNPY). Residues 93 to 170 (RSVYVGNVDY…RTIKVLPKRT (78 aa)) form the RRM domain. The segment covering 198–209 (QRPRGRPFRGRG) has biased composition (basic residues).

Homodimer; Upon poly(A) binding, undergoes a dimer-monomer transition that removes the polyproline motif from the RNA recognition site and allows it to be replaced by the adenosine nucleotides of poly(A).

It localises to the cytoplasm. Its function is as follows. Binds the poly(A) tail of mRNA. Unable to interact with the cap-binding complex and is therefore unlikely to be involved in translation initiation. This is Embryonic polyadenylate-binding protein 2-B (Pabpn1l-b) from Xenopus laevis (African clawed frog).